The primary structure comprises 279 residues: MGRTYRTIGINLKAMPLGESDRLLSVFSRDRGLLKLVAPHSRGSRSRLGGRVDLFVVNDLFISPGRNLDRILQAETVATYQGLHHQLTTLTAAQYLGEVVLYQIHPQQPQPELFDWFCATLDQLQGASSRAALAILVRGLCGILRLGGIAPEWYQCHESGCKIAVPTADTDWRLGFSFAGGGVFRIRADHPVGNESVAGAGGDRQLTASEVRLGQWLAMPTTQFLARDEFLTQAEAYPLSVWLSLERVLRQYLQFHLEQPLRVPPLLDSCFSPVAVSQP.

The protein belongs to the RecO family.

Involved in DNA repair and RecF pathway recombination. The polypeptide is DNA repair protein RecO (Thermosynechococcus vestitus (strain NIES-2133 / IAM M-273 / BP-1)).